Consider the following 318-residue polypeptide: Transaldolase (318 aa).

Lysine 132 (schiff-base intermediate with substrate) is an active-site residue.

Belongs to the transaldolase family. Type 1 subfamily. As to quaternary structure, homodimer.

Its subcellular location is the cytoplasm. The catalysed reaction is D-sedoheptulose 7-phosphate + D-glyceraldehyde 3-phosphate = D-erythrose 4-phosphate + beta-D-fructose 6-phosphate. It participates in carbohydrate degradation; pentose phosphate pathway; D-glyceraldehyde 3-phosphate and beta-D-fructose 6-phosphate from D-ribose 5-phosphate and D-xylulose 5-phosphate (non-oxidative stage): step 2/3. Its function is as follows. Transaldolase is important for the balance of metabolites in the pentose-phosphate pathway. In Shewanella sp. (strain MR-7), this protein is Transaldolase.